We begin with the raw amino-acid sequence, 433 residues long: tRNA(Ile2) 2-agmatinylcytidine synthetase TiaS (433 aa).

It belongs to the TiaS family.

It is found in the cytoplasm. It carries out the reaction cytidine(34) in tRNA(Ile2) + agmatine + ATP + H2O = 2-agmatinylcytidine(34) in tRNA(Ile2) + AMP + 2 phosphate + 2 H(+). Its function is as follows. ATP-dependent agmatine transferase that catalyzes the formation of 2-agmatinylcytidine (agm2C) at the wobble position (C34) of tRNA(Ile2), converting the codon specificity from AUG to AUA. In Methanopyrus kandleri (strain AV19 / DSM 6324 / JCM 9639 / NBRC 100938), this protein is tRNA(Ile2) 2-agmatinylcytidine synthetase TiaS.